The chain runs to 963 residues: Importin-13 (963 aa).

HEAT repeat units lie at residues 24 to 54 (ENVE…QAQV), 56 to 88 (PQAW…KISR), 95 to 135 (TDQY…LSMM), 142 to 179 (AVAD…EFQT), 194 to 231 (LAVE…SWVQ), 236 to 268 (LQDC…NAIS), 276 to 325 (VNTL…ALLD), 330 to 372 (WQSF…DDIL), 375 to 438 (EAEK…YEML), 440 to 476 (AELL…FQSI), 487 to 522 (VVPG…WLAD), 524 to 558 (PVMI…CREC), 562 to 600 (LPPY…LLSA), 603 to 648 (VEEI…SNLF), 676 to 716 (PVVV…VKTL), 720 to 754 (FAPM…VHIF), 761 to 803 (FPPI…ALKR), 815 to 845 (VKAV…TELL), 860 to 893 (EDGR…FALN), and 897 to 931 (FSLL…QQIL). The Importin N-terminal domain maps to 45 to 111 (AQKWLMQAQV…KAQLFTQITR (67 aa)).

The protein belongs to the importin beta family. Interacts with UBC9, RAN, RBM8A, eIF-1A and PAX6. In terms of tissue distribution, expressed in fetal brain, heart, intestine and kidney.

It is found in the cytoplasm. It localises to the nucleus. In terms of biological role, functions in nuclear protein import as nuclear transport receptor. Serves as receptor for nuclear localization signals (NLS) in cargo substrates. Is thought to mediate docking of the importin/substrate complex to the nuclear pore complex (NPC) through binding to nucleoporin and the complex is subsequently translocated through the pore by an energy requiring, Ran-dependent mechanism. At the nucleoplasmic side of the NPC, Ran binds to the importin, the importin/substrate complex dissociates and importin is re-exported from the nucleus to the cytoplasm where GTP hydrolysis releases Ran. The directionality of nuclear import is thought to be conferred by an asymmetric distribution of the GTP- and GDP-bound forms of Ran between the cytoplasm and nucleus. Mediates the nuclear import of UBC9, the RBM8A/MAGOH complex, PAX6 and probably other members of the paired homeobox family. Also mediates nuclear export of eIF-1A, and the cytoplasmic release of eIF-1A is triggered by the loading of import substrates onto IPO13. The chain is Importin-13 (IPO13) from Homo sapiens (Human).